The following is a 254-amino-acid chain: Cdc42 effector protein 3 (254 aa).

The CRIB domain occupies 31 to 45; sequence ISPPLGDFRHTIHIG. Phosphotyrosine is present on Tyr63. Phosphoserine occurs at positions 89, 108, and 144. The disordered stretch occupies residues 165–205; sequence VHQGDTSWGSSGSGSQSSQGRDSHSSSLSEQSSDWPADDMF. Positions 171–197 are enriched in low complexity; sequence SWGSSGSGSQSSQGRDSHSSSLSEQSS.

Belongs to the BORG/CEP family. Interacts with RHOQ and CDC42, in a GTP-dependent manner, and with SEPT7.

The protein resides in the endomembrane system. The protein localises to the cytoplasm. It is found in the cytoskeleton. Functionally, probably involved in the organization of the actin cytoskeleton. May act downstream of CDC42 to induce actin filament assembly leading to cell shape changes. Induces pseudopodia formation in fibroblasts. This Mus musculus (Mouse) protein is Cdc42 effector protein 3 (Cdc42ep3).